The following is a 453-amino-acid chain: Ribulose bisphosphate carboxylase large chain (453 aa).

The propeptide occupies 1–2 (MS). Proline 3 is modified (N-acetylproline). N6,N6,N6-trimethyllysine is present on lysine 14. Substrate is bound by residues asparagine 123 and threonine 173. Lysine 175 (proton acceptor) is an active-site residue. Residue lysine 177 coordinates substrate. Residues lysine 201, aspartate 203, and glutamate 204 each contribute to the Mg(2+) site. Lysine 201 is subject to N6-carboxylysine. Catalysis depends on histidine 294, which acts as the Proton acceptor. Residues arginine 295, histidine 327, and serine 379 each coordinate substrate.

The protein belongs to the RuBisCO large chain family. Type I subfamily. Heterohexadecamer of 8 large chains and 8 small chains; disulfide-linked. The disulfide link is formed within the large subunit homodimers. The cofactor is Mg(2+). The disulfide bond which can form in the large chain dimeric partners within the hexadecamer appears to be associated with oxidative stress and protein turnover.

The protein localises to the plastid. It localises to the chloroplast. It catalyses the reaction 2 (2R)-3-phosphoglycerate + 2 H(+) = D-ribulose 1,5-bisphosphate + CO2 + H2O. The catalysed reaction is D-ribulose 1,5-bisphosphate + O2 = 2-phosphoglycolate + (2R)-3-phosphoglycerate + 2 H(+). In terms of biological role, ruBisCO catalyzes two reactions: the carboxylation of D-ribulose 1,5-bisphosphate, the primary event in carbon dioxide fixation, as well as the oxidative fragmentation of the pentose substrate in the photorespiration process. Both reactions occur simultaneously and in competition at the same active site. The chain is Ribulose bisphosphate carboxylase large chain from Phuopsis stylosa (Caucasian crosswort).